Here is a 585-residue protein sequence, read N- to C-terminus: Probable ubiquitin carboxyl-terminal hydrolase 9 (585 aa).

The interval 1 to 23 is disordered; that stretch reads MSLLRWMGMNSPGSTDRRKSTWE. The region spanning 41 to 424 is the USP domain; the sequence is YGLTNYGNTC…TAYVLFYTAA (384 aa). Residue Cys-50 is the Nucleophile of the active site. Residues 85-110 form a disordered region; it reads CTKTNHPESSSSRHSKKKSMENRKSS. Residue His-375 is the Proton acceptor of the active site. A compositionally biased stretch (polar residues) spans 447 to 470; it reads SQLKQESVEVSNLSSTPRSNSTIT. The interval 447-473 is disordered; the sequence is SQLKQESVEVSNLSSTPRSNSTITYPD. Residue Ser-505 is modified to Phosphoserine. 2 disordered regions span residues 511–530 and 540–585; these read FHSRSVDASPKAVRRESRSF and KFFG…RSKR. The span at 542–551 shows a compositional bias: polar residues; the sequence is FGSSQSNSPK. Ser-549 is modified (phosphoserine). The segment covering 553–570 has biased composition (basic and acidic residues); the sequence is SPLRDTHKSSDEHSESKH. Positions 574–585 are enriched in polar residues; that stretch reads LPWQFSRSRSKR.

The protein belongs to the peptidase C19 family. In terms of assembly, interacts with bun107 and bun62.

It is found in the nucleus. The protein resides in the cytoplasm. Its subcellular location is the cell tip. It catalyses the reaction Thiol-dependent hydrolysis of ester, thioester, amide, peptide and isopeptide bonds formed by the C-terminal Gly of ubiquitin (a 76-residue protein attached to proteins as an intracellular targeting signal).. In terms of biological role, ubiquitin C-terminal hydrolase involved in regulating actin dynamics and/or endocytosis at cell tips and septa. The sequence is that of Probable ubiquitin carboxyl-terminal hydrolase 9 (ubp9) from Schizosaccharomyces pombe (strain 972 / ATCC 24843) (Fission yeast).